A 105-amino-acid polypeptide reads, in one-letter code: Dynein axonemal light chain 4 (105 aa).

It belongs to the dynein light chain family. As to quaternary structure, consists of at least two heavy chains and a number of intermediate and light chains.

The protein localises to the cytoplasm. The protein resides in the cytoskeleton. It is found in the cilium axoneme. Its function is as follows. Force generating protein of respiratory cilia. Produces force towards the minus ends of microtubules. Dynein has ATPase activity. The polypeptide is Dynein axonemal light chain 4 (DNAL4) (Bos taurus (Bovine)).